Here is a 100-residue protein sequence, read N- to C-terminus: Aspartyl/glutamyl-tRNA(Asn/Gln) amidotransferase subunit C (100 aa).

The protein belongs to the GatC family. In terms of assembly, heterotrimer of A, B and C subunits.

The enzyme catalyses L-glutamyl-tRNA(Gln) + L-glutamine + ATP + H2O = L-glutaminyl-tRNA(Gln) + L-glutamate + ADP + phosphate + H(+). It carries out the reaction L-aspartyl-tRNA(Asn) + L-glutamine + ATP + H2O = L-asparaginyl-tRNA(Asn) + L-glutamate + ADP + phosphate + 2 H(+). In terms of biological role, allows the formation of correctly charged Asn-tRNA(Asn) or Gln-tRNA(Gln) through the transamidation of misacylated Asp-tRNA(Asn) or Glu-tRNA(Gln) in organisms which lack either or both of asparaginyl-tRNA or glutaminyl-tRNA synthetases. The reaction takes place in the presence of glutamine and ATP through an activated phospho-Asp-tRNA(Asn) or phospho-Glu-tRNA(Gln). The sequence is that of Aspartyl/glutamyl-tRNA(Asn/Gln) amidotransferase subunit C from Staphylococcus aureus (strain Newman).